A 436-amino-acid polypeptide reads, in one-letter code: Histidinol dehydrogenase (436 aa).

Tyrosine 135, glutamine 197, and asparagine 220 together coordinate NAD(+). Substrate contacts are provided by threonine 243, glutamine 265, and histidine 268. Zn(2+)-binding residues include glutamine 265 and histidine 268. Active-site proton acceptor residues include glutamate 334 and histidine 335. The substrate site is built by histidine 335, aspartate 368, glutamate 422, and histidine 427. Aspartate 368 contacts Zn(2+). Histidine 427 serves as a coordination point for Zn(2+).

This sequence belongs to the histidinol dehydrogenase family. Zn(2+) serves as cofactor.

It carries out the reaction L-histidinol + 2 NAD(+) + H2O = L-histidine + 2 NADH + 3 H(+). The protein operates within amino-acid biosynthesis; L-histidine biosynthesis; L-histidine from 5-phospho-alpha-D-ribose 1-diphosphate: step 9/9. In terms of biological role, catalyzes the sequential NAD-dependent oxidations of L-histidinol to L-histidinaldehyde and then to L-histidine. This is Histidinol dehydrogenase from Deinococcus radiodurans (strain ATCC 13939 / DSM 20539 / JCM 16871 / CCUG 27074 / LMG 4051 / NBRC 15346 / NCIMB 9279 / VKM B-1422 / R1).